The primary structure comprises 255 residues: Coiled-coil domain-containing 92B (255 aa).

Positions 28-90 form a coiled coil; it reads LRDLHLEILR…AAANAELRRE (63 aa). The disordered stretch occupies residues 149 to 255; that stretch reads QRLQAPRPGP…SQPSAPGDPE (107 aa). Residues 166–177 are compositionally biased toward basic residues; sequence PRRRALRARRPP. The span at 242–255 shows a compositional bias: pro residues; it reads QPAPSQPSAPGDPE.

This is Coiled-coil domain-containing 92B from Homo sapiens (Human).